We begin with the raw amino-acid sequence, 294 residues long: MFQGVYTAIITPFKNDKIDYDSYNKLLEKQIKAGVNGVVPCGTTGESPTLSHTEHAELIRETVKAVQGKIQVVAGTGSNSTREAIELTEAACKDSVDGILSVNPYYNKPTQEGLFQHFQAVAEHSSVPVMLYNIPGRTSINLQPETVFRLSEIKRIRSMKEATGDLGQMGKLISLVGNKMTVLSGDDNLTLPLLAIGGVGVVSVVSNLFPKAMVEMVKYFQDGKVIEARKIHYDFIEAFALAFMETNPIPIKAAMSWFGHCEPEIRLPLTRLSQNETSVKFKKALEVLKEKGYE.

A pyruvate-binding site is contributed by T44. The Proton donor/acceptor role is filled by Y132. K160 serves as the catalytic Schiff-base intermediate with substrate. A pyruvate-binding site is contributed by V202.

This sequence belongs to the DapA family. Homotetramer; dimer of dimers.

It localises to the cytoplasm. It catalyses the reaction L-aspartate 4-semialdehyde + pyruvate = (2S,4S)-4-hydroxy-2,3,4,5-tetrahydrodipicolinate + H2O + H(+). It functions in the pathway amino-acid biosynthesis; L-lysine biosynthesis via DAP pathway; (S)-tetrahydrodipicolinate from L-aspartate: step 3/4. Its function is as follows. Catalyzes the condensation of (S)-aspartate-beta-semialdehyde [(S)-ASA] and pyruvate to 4-hydroxy-tetrahydrodipicolinate (HTPA). This Leptospira borgpetersenii serovar Hardjo-bovis (strain JB197) protein is 4-hydroxy-tetrahydrodipicolinate synthase.